Reading from the N-terminus, the 218-residue chain is Small ribosomal subunit protein uS3c (218 aa).

The KH type-2 domain maps to 47–118 (VRKHIKSSSN…KLRMALTEVE (72 aa)).

Belongs to the universal ribosomal protein uS3 family. Part of the 30S ribosomal subunit.

It localises to the plastid. The protein resides in the chloroplast. This Anthoceros angustus (Hornwort) protein is Small ribosomal subunit protein uS3c (rps3).